Consider the following 59-residue polypeptide: MKILSVLLLALIICSIIDWSEGQFTQESCTASNQCWSICKRLHNTNRGKCMNKKCRCYS.

A signal peptide spans 1-22 (MKILSVLLLALIICSIIDWSEG). Gln23 carries the post-translational modification Pyrrolidone carboxylic acid. 3 cysteine pairs are disulfide-bonded: Cys29–Cys50, Cys35–Cys55, and Cys39–Cys57. The interaction with Ca(2+)-activated K(+) channels stretch occupies residues 48 to 55 (GKCMNKKC).

The protein belongs to the short scorpion toxin superfamily. Potassium channel inhibitor family. Alpha-KTx 01 subfamily. In terms of tissue distribution, expressed by the venom gland.

It localises to the secreted. Its function is as follows. Blocks calcium-activated potassium channels (Kd=43 nM on KCa1.1/KCNMA1). Has a potent presynaptic facilitatory action, with less effect on direct muscle stimulation. This Leiurus hebraeus (Hebrew deathstalker scorpion) protein is Potassium channel toxin alpha-KTx 1.2.